A 722-amino-acid polypeptide reads, in one-letter code: Polyribonucleotide nucleotidyltransferase (722 aa).

Residues Asp-495 and Asp-501 each coordinate Mg(2+). Residues 562–621 (PRLLSFRIDPELIGTVIGPGGRTIKGITERTNTKIDIEDGGIVTIASHDGAAAEEAQRII) enclose the KH domain. Residues 631-699 (GEIFPGSITR…NRGRINLTLR (69 aa)) enclose the S1 motif domain. The disordered stretch occupies residues 700-722 (GVSQNGGMSNYPEPTPTPVAPLT). Over residues 712 to 722 (EPTPTPVAPLT) the composition is skewed to pro residues.

Belongs to the polyribonucleotide nucleotidyltransferase family. Requires Mg(2+) as cofactor.

Its subcellular location is the cytoplasm. It carries out the reaction RNA(n+1) + phosphate = RNA(n) + a ribonucleoside 5'-diphosphate. In terms of biological role, involved in mRNA degradation. Catalyzes the phosphorolysis of single-stranded polyribonucleotides processively in the 3'- to 5'-direction. The protein is Polyribonucleotide nucleotidyltransferase of Prochlorococcus marinus (strain NATL2A).